Here is a 295-residue protein sequence, read N- to C-terminus: Large ribosomal subunit protein uL15m (295 aa).

The transit peptide at 1-20 (MAGTARGCGTSLDLLRSLPR) directs the protein to the mitochondrion. Residues 21-67 (VSLANLKPSPNSRKRERRPRDRRRGRKCGRGHKGERQRGTRPRLGFE) are disordered. Basic residues predominate over residues 32–51 (SRKRERRPRDRRRGRKCGRG).

It belongs to the universal ribosomal protein uL15 family. As to quaternary structure, component of the mitochondrial ribosome large subunit (39S) which comprises a 16S rRNA and about 50 distinct proteins.

It is found in the mitochondrion. The chain is Large ribosomal subunit protein uL15m (Mrpl15) from Mus musculus (Mouse).